The following is a 427-amino-acid chain: 3-phosphoshikimate 1-carboxyvinyltransferase (427 aa).

Positions 22, 23, and 27 each coordinate 3-phosphoshikimate. Lys22 serves as a coordination point for phosphoenolpyruvate. The phosphoenolpyruvate site is built by Gly96 and Arg124. 7 residues coordinate 3-phosphoshikimate: Ser169, Ser170, Gln171, Ser197, Asp313, Asn336, and Lys340. Residue Gln171 coordinates phosphoenolpyruvate. The active-site Proton acceptor is the Asp313. Phosphoenolpyruvate contacts are provided by Arg344, Arg386, and Lys411.

Belongs to the EPSP synthase family. In terms of assembly, monomer.

The protein resides in the cytoplasm. The enzyme catalyses 3-phosphoshikimate + phosphoenolpyruvate = 5-O-(1-carboxyvinyl)-3-phosphoshikimate + phosphate. The protein operates within metabolic intermediate biosynthesis; chorismate biosynthesis; chorismate from D-erythrose 4-phosphate and phosphoenolpyruvate: step 6/7. Catalyzes the transfer of the enolpyruvyl moiety of phosphoenolpyruvate (PEP) to the 5-hydroxyl of shikimate-3-phosphate (S3P) to produce enolpyruvyl shikimate-3-phosphate and inorganic phosphate. This Escherichia coli (strain SMS-3-5 / SECEC) protein is 3-phosphoshikimate 1-carboxyvinyltransferase.